Here is a 259-residue protein sequence, read N- to C-terminus: Dihydroorotate dehydrogenase B (NAD(+)), electron transfer subunit (259 aa).

The 101-residue stretch at 1 to 101 (MKIEDCTVEE…MGPLGRGYDV (101 aa)) folds into the FAD-binding FR-type domain. Residues 52-55 (RPIS), 69-71 (IYR), and 76-77 (GT) each bind FAD. [2Fe-2S] cluster-binding residues include Cys-223, Cys-228, Cys-231, and Cys-245.

The protein belongs to the PyrK family. As to quaternary structure, heterotetramer of 2 PyrK and 2 PyrD type B subunits. [2Fe-2S] cluster is required as a cofactor. It depends on FAD as a cofactor.

It functions in the pathway pyrimidine metabolism; UMP biosynthesis via de novo pathway; orotate from (S)-dihydroorotate (NAD(+) route): step 1/1. Responsible for channeling the electrons from the oxidation of dihydroorotate from the FMN redox center in the PyrD type B subunit to the ultimate electron acceptor NAD(+). The protein is Dihydroorotate dehydrogenase B (NAD(+)), electron transfer subunit of Fusobacterium nucleatum subsp. nucleatum (strain ATCC 25586 / DSM 15643 / BCRC 10681 / CIP 101130 / JCM 8532 / KCTC 2640 / LMG 13131 / VPI 4355).